The following is a 409-amino-acid chain: Elongation factor Tu (409 aa).

The 205-residue stretch at 10 to 214 folds into the tr-type G domain; sequence KPHVNIGTIG…EVDGYIPQPE (205 aa). The interval 19 to 26 is G1; the sequence is GHVDHGKT. 19–26 serves as a coordination point for GTP; it reads GHVDHGKT. T26 is a Mg(2+) binding site. Residues 60–64 are G2; that stretch reads GITIN. The segment at 81–84 is G3; that stretch reads DCPG. Residues 81-85 and 136-139 contribute to the GTP site; these read DCPGH and NKQD. The tract at residues 136 to 139 is G4; that stretch reads NKQD. A G5 region spans residues 174–176; sequence SAL.

Belongs to the TRAFAC class translation factor GTPase superfamily. Classic translation factor GTPase family. EF-Tu/EF-1A subfamily. In terms of assembly, monomer.

Its subcellular location is the cytoplasm. It carries out the reaction GTP + H2O = GDP + phosphate + H(+). GTP hydrolase that promotes the GTP-dependent binding of aminoacyl-tRNA to the A-site of ribosomes during protein biosynthesis. The sequence is that of Elongation factor Tu from Trichodesmium erythraeum (strain IMS101).